A 788-amino-acid chain; its full sequence is Ribonucleoside-diphosphate reductase subunit alpha (788 aa).

Positions I2 to G92 constitute an ATP-cone domain. ATP contacts are provided by residues K6, E12–K18, and T52. Residue T200 coordinates GDP. C216 and C497 are disulfide-bonded. Residues D223–I225 and R253 contribute to the dTTP site. Residue N424 participates in GDP binding. N424 serves as the catalytic Proton acceptor. Catalysis depends on C426, which acts as the Cysteine radical intermediate. GDP-binding positions include E428 and S661–I663. E428 functions as the Proton acceptor in the catalytic mechanism.

This sequence belongs to the ribonucleoside diphosphate reductase large chain family. As to quaternary structure, tetramer of two alpha and two beta subunits.

The catalysed reaction is a 2'-deoxyribonucleoside 5'-diphosphate + [thioredoxin]-disulfide + H2O = a ribonucleoside 5'-diphosphate + [thioredoxin]-dithiol. Its activity is regulated as follows. Under complex allosteric control mediated by deoxynucleoside triphosphates and ATP binding to separate specificity and activation sites on the alpha subunit. The type of nucleotide bound at the specificity site determines substrate preference. It seems probable that ATP makes the enzyme reduce CDP and UDP, dGTP favors ADP reduction and dTTP favors GDP reduction. Stimulated by ATP and inhibited by dATP binding to the activity site. In terms of biological role, provides the precursors necessary for DNA synthesis. Catalyzes the biosynthesis of deoxyribonucleotides from the corresponding ribonucleotides. This Helicobacter pylori (strain J99 / ATCC 700824) (Campylobacter pylori J99) protein is Ribonucleoside-diphosphate reductase subunit alpha (nrdA).